Here is a 160-residue protein sequence, read N- to C-terminus: Outer membrane protein MT2024.1 (160 aa).

The N-terminal stretch at 1-22 (MSWSRVIAYGLLPGLALALTCG) is a signal peptide.

The protein localises to the cell outer membrane. The sequence is that of Outer membrane protein MT2024.1 from Mycobacterium tuberculosis (strain CDC 1551 / Oshkosh).